A 115-amino-acid chain; its full sequence is Promotilin (115 aa).

An N-terminal signal peptide occupies residues 1–25 (MVSRKAVAALLVVHVAAMLASQTEA). The segment at 39–72 (QEKERNKGQKKSLSVWQRSGEEGPVDPAEPIREE) is disordered.

It belongs to the motilin family.

Its subcellular location is the secreted. Its function is as follows. Plays an important role in the regulation of interdigestive gastrointestinal motility and indirectly causes rhythmic contraction of duodenal and colonic smooth muscle. In Homo sapiens (Human), this protein is Promotilin (MLN).